Consider the following 339-residue polypeptide: Ketol-acid reductoisomerase (NADP(+)) (339 aa).

The KARI N-terminal Rossmann domain maps to 1-182 (MRVYYDRDAD…GGGRSGVIET (182 aa)). NADP(+) contacts are provided by residues 24 to 27 (YGSQ), R48, S51, T53, and 83 to 86 (DEHQ). The active site involves H108. G134 is a binding site for NADP(+). Positions 183–328 (TFKEECETDL…AELRAMMPWI (146 aa)) constitute a KARI C-terminal knotted domain. Mg(2+) contacts are provided by D191, E195, E227, and E231. Residue S252 participates in substrate binding.

It belongs to the ketol-acid reductoisomerase family. It depends on Mg(2+) as a cofactor.

It catalyses the reaction (2R)-2,3-dihydroxy-3-methylbutanoate + NADP(+) = (2S)-2-acetolactate + NADPH + H(+). The enzyme catalyses (2R,3R)-2,3-dihydroxy-3-methylpentanoate + NADP(+) = (S)-2-ethyl-2-hydroxy-3-oxobutanoate + NADPH + H(+). The protein operates within amino-acid biosynthesis; L-isoleucine biosynthesis; L-isoleucine from 2-oxobutanoate: step 2/4. Its pathway is amino-acid biosynthesis; L-valine biosynthesis; L-valine from pyruvate: step 2/4. Its function is as follows. Involved in the biosynthesis of branched-chain amino acids (BCAA). Catalyzes an alkyl-migration followed by a ketol-acid reduction of (S)-2-acetolactate (S2AL) to yield (R)-2,3-dihydroxy-isovalerate. In the isomerase reaction, S2AL is rearranged via a Mg-dependent methyl migration to produce 3-hydroxy-3-methyl-2-ketobutyrate (HMKB). In the reductase reaction, this 2-ketoacid undergoes a metal-dependent reduction by NADPH to yield (R)-2,3-dihydroxy-isovalerate. In Rhizorhabdus wittichii (strain DSM 6014 / CCUG 31198 / JCM 15750 / NBRC 105917 / EY 4224 / RW1) (Sphingomonas wittichii), this protein is Ketol-acid reductoisomerase (NADP(+)).